Consider the following 122-residue polypeptide: MICOS complex subunit MIC13 homolog QIL1 (122 aa).

The chain crosses the membrane as a helical span at residues Gly-9–Trp-25.

The protein belongs to the MICOS complex subunit Mic13 family. As to quaternary structure, component of the mitochondrial contact site and cristae organizing system (MICOS) complex.

It localises to the mitochondrion inner membrane. Functionally, component of the MICOS complex, a large protein complex of the mitochondrial inner membrane that plays crucial roles in the maintenance of crista junctions, inner membrane architecture, and formation of contact sites to the outer membrane. The sequence is that of MICOS complex subunit MIC13 homolog QIL1 from Drosophila melanogaster (Fruit fly).